The primary structure comprises 859 residues: MVSIAFYGGIPGGISTPITQQSEKSKCEENTMFQPYCYNNDSKNSMAESKEARDQEMNLKEESKEEKRRNDWWEIGMFLLCLAGTTGGILWWYEGLPQQHYIGLVAIGGRLNGSGQSNAIECWGSFPGCRPFQNYFSYETNRSMHMDNNTATLLEAYHREIAFIYKSSCTDSDHCQEYQCKKVNLNSSDSSNSVRVEDVTNTAEYWGFKWLECNQTEHFKTILVPENEMVNINDTDTWIPKGCNETWARVKRCPIDILYGIHPIRLCVQPPFFLVQEKGIADTSRIGNCGPTIFLGVLEDNKGVVRGDYTACNVRRLNINRKDYTGIYQVPIFYTCTFTNITSCNNEPIISVIMYETNQVQYLLCNNNNSNNYNCVVQSFGVIGQAHLELPRPNKRIRNQSFNQYNCSINNKTELETWNLVNTSGLTPLPISSEANTGLIRHKRDFGISAIVAAIVAATAIAASATMSYVALTEVNKIMEVQNHTFEVENSTLNGMDLIERQIKILYAMILQTHADVQLLKERQQVEETFNLIGCIERTHVFCHTGHPWNMSWGHLNESTQWDDWVSKMEDLNQEILTTLHGARNNLAQSMITFNTPDSIAQFGKDLWSHIGNWIPGLGASIIKYIVMFLLIYLLLTSSPKILRALWKVTSGAGSSGSRYLKKKFHHKHASREDTWDQAQHSIHLAGVTGGSGDKYYKQKYSRNDWNGESEEYNRRPKSWVKSIEAFGESYISEKTKGEISQPGAAINEHKNGSGGNNPHQGSLDLEIRSEGGNIYDCCIKAQEGTLAIPCCGFPLWLFWGLVIIVGRIAGYGLRGLAVIIRICIRGLNLIFEIIRKMLDYIGRALNPGTSHVSMPQYV.

A propeptide spanning residues 1–6 (MVSIAF) is cleaved from the precursor. Residues 7 to 614 (YGGIPGGIST…KDLWSHIGNW (608 aa)) lie on the Extracellular side of the membrane. N-linked (GlcNAc...) asparagine; by host glycans are attached at residues Asn40, Asn112, Asn141, Asn148, Asn186, Asn214, Asn233, Asn244, Asn340, Asn368, Asn399, Asn406, Asn411, and Asn422. Residues 446 to 466 (FGISAIVAAIVAATAIAASAT) are fusion peptide. N-linked (GlcNAc...) asparagine; by host glycans are attached at residues Asn483 and Asn490. The interval 498 to 513 (LIERQIKILYAMILQT) is immunosuppression. Asn550 and Asn557 each carry an N-linked (GlcNAc...) asparagine; by host glycan. Coiled-coil stretches lie at residues 576–624 (ILTT…SIIK) and 663–699 (KKFH…YYKQ). The chain crosses the membrane as a helical span at residues 615–635 (IPGLGASIIKYIVMFLLIYLL). Residues 636–859 (LTSSPKILRA…TSHVSMPQYV (224 aa)) lie on the Cytoplasmic side of the membrane. Positions 745–764 (AAINEHKNGSGGNNPHQGSL) are disordered.

The mature envelope protein (Env) consists of a trimer of SU-TM heterodimers attached by noncovalent interactions or by a labile interchain disulfide bond. In terms of processing, specific enzymatic cleavages in vivo yield mature proteins. Envelope glycoproteins are synthesized as an inactive precursor that is N-glycosylated and processed likely by host cell furin or by a furin-like protease in the Golgi to yield the mature SU and TM proteins. The cleavage site between SU and TM requires the minimal sequence [KR]-X-[KR]-R.

It is found in the virion membrane. The protein localises to the host cell membrane. Functionally, the surface protein (SU) attaches the virus to the host cell by binding to its receptor. This interaction triggers the refolding of the transmembrane protein (TM) and is thought to activate its fusogenic potential by unmasking its fusion peptide. Fusion occurs at the host cell plasma membrane. The transmembrane protein (TM) acts as a class I viral fusion protein. Under the current model, the protein has at least 3 conformational states: pre-fusion native state, pre-hairpin intermediate state, and post-fusion hairpin state. During viral and target cell membrane fusion, the coiled coil regions (heptad repeats) assume a trimer-of-hairpins structure, positioning the fusion peptide in close proximity to the C-terminal region of the ectodomain. The formation of this structure appears to drive apposition and subsequent fusion of viral and target cell membranes. Membranes fusion leads to delivery of the nucleocapsid into the cytoplasm. This Equus asinus (Donkey) protein is Envelope glycoprotein (env).